A 180-amino-acid polypeptide reads, in one-letter code: Signal peptidase complex subunit 3 (180 aa).

Residues 1 to 12 (MHNLLSRANSLL) are Cytoplasmic-facing. The chain crosses the membrane as a helical; Signal-anchor for type II membrane protein span at residues 13–33 (AFTLWVMAAVTAACFLSTVFL). Over 34-180 (DYTVSNHLEV…PTTYTTTRRS (147 aa)) the chain is Lumenal. A glycan (N-linked (GlcNAc...) asparagine) is linked at Asn-141.

Belongs to the SPCS3 family. In terms of assembly, component of the signal peptidase complex (SPC) composed of a catalytic subunit sec-11 and three accessory subunits spcs-1, spcs-2 and spcs-3. The complex induces a local thinning of the ER membrane which is used to measure the length of the signal peptide (SP) h-region of protein substrates. This ensures the selectivity of the complex towards h-regions shorter than 18-20 amino acids.

Its subcellular location is the endoplasmic reticulum membrane. Its function is as follows. Essential component of the signal peptidase complex (SPC) which catalyzes the cleavage of N-terminal signal sequences from nascent proteins as they are translocated into the lumen of the endoplasmic reticulum. Essential for the SPC catalytic activity, possibly by stabilizing and positioning the active center of the complex close to the lumenal surface. The polypeptide is Signal peptidase complex subunit 3 (Caenorhabditis briggsae).